A 102-amino-acid polypeptide reads, in one-letter code: Small ribosomal subunit protein uS10 (102 aa).

The protein belongs to the universal ribosomal protein uS10 family. Part of the 30S ribosomal subunit.

Its function is as follows. Involved in the binding of tRNA to the ribosomes. The chain is Small ribosomal subunit protein uS10 from Leptospira borgpetersenii serovar Hardjo-bovis (strain JB197).